The sequence spans 150 residues: Nucleoside diphosphate kinase (150 aa).

ATP is bound by residues K10, F58, R86, T92, R103, and N113. Residue H116 is the Pros-phosphohistidine intermediate of the active site.

Belongs to the NDK family. It depends on Mg(2+) as a cofactor.

It localises to the cytoplasm. It carries out the reaction a 2'-deoxyribonucleoside 5'-diphosphate + ATP = a 2'-deoxyribonucleoside 5'-triphosphate + ADP. The catalysed reaction is a ribonucleoside 5'-diphosphate + ATP = a ribonucleoside 5'-triphosphate + ADP. Functionally, major role in the synthesis of nucleoside triphosphates other than ATP. The ATP gamma phosphate is transferred to the NDP beta phosphate via a ping-pong mechanism, using a phosphorylated active-site intermediate. In Methanobrevibacter smithii (strain ATCC 35061 / DSM 861 / OCM 144 / PS), this protein is Nucleoside diphosphate kinase.